Consider the following 480-residue polypeptide: 2-phosphoxylose phosphatase 1 (480 aa).

Topologically, residues 1-6 are cytoplasmic; it reads MLFRNR. Residues 7 to 27 traverse the membrane as a helical; Signal-anchor for type II membrane protein segment; that stretch reads FLLLLALAALLAFVSLSLQFF. The Lumenal segment spans residues 28–480; it reads HLIPVSTPKN…YYDACHREGF (453 aa). H97 serves as the catalytic Nucleophile. N-linked (GlcNAc...) asparagine glycosylation is found at N305 and N354. D379 functions as the Proton donor in the catalytic mechanism.

It belongs to the histidine acid phosphatase family. Interacts with B3GAT3; the interaction increases the 2-phosphoxylose phosphatase activity of PXYLP1 during completion of linkage region formation in a B3GAT3-mediated manner. In terms of tissue distribution, widely expressed. Strongly expressed in spleen, fetal liver, moderately in placenta, pancreas, kidney, thymus and colon.

It is found in the golgi apparatus membrane. The catalysed reaction is 3-O-[beta-D-GlcA-(1-&gt;3)-beta-D-Gal-(1-&gt;3)-beta-D-Gal-(1-&gt;4)-beta-D-2-O-P-Xyl]-L-seryl-[protein] + H2O = 3-O-(beta-D-GlcA-(1-&gt;3)-beta-D-Gal-(1-&gt;3)-beta-D-Gal-(1-&gt;4)-beta-D-Xyl)-L-seryl-[protein] + phosphate. Responsible for the 2-O-dephosphorylation of xylose in the glycosaminoglycan-protein linkage region of proteoglycans thereby regulating the amount of mature glycosaminoglycan (GAG) chains. Sulfated glycosaminoglycans (GAGs), including heparan sulfate and chondroitin sulfate, are synthesized on the so-called common GAG-protein linkage region (GlcUAbeta1-3Galbeta1-3Galbeta1-4Xylbeta1-O-Ser) of core proteins, which is formed by the stepwise addition of monosaccharide residues by the respective specific glycosyltransferases. Xylose 2-O-dephosphorylation during completion of linkage region formation is a prerequisite for the initiation and efficient elongation of the repeating disaccharide region of GAG chains. This is 2-phosphoxylose phosphatase 1 from Homo sapiens (Human).